Consider the following 98-residue polypeptide: NADH-ubiquinone oxidoreductase chain 4L (98 aa).

3 helical membrane-spanning segments follow: residues Met-1–Val-21, Ser-29–Leu-49, and Ile-61–Val-81.

It belongs to the complex I subunit 4L family. As to quaternary structure, core subunit of respiratory chain NADH dehydrogenase (Complex I) which is composed of 45 different subunits.

The protein resides in the mitochondrion inner membrane. The catalysed reaction is a ubiquinone + NADH + 5 H(+)(in) = a ubiquinol + NAD(+) + 4 H(+)(out). Functionally, core subunit of the mitochondrial membrane respiratory chain NADH dehydrogenase (Complex I) which catalyzes electron transfer from NADH through the respiratory chain, using ubiquinone as an electron acceptor. Part of the enzyme membrane arm which is embedded in the lipid bilayer and involved in proton translocation. The polypeptide is NADH-ubiquinone oxidoreductase chain 4L (MT-ND4L) (Odobenus rosmarus rosmarus (Atlantic walrus)).